Here is a 121-residue protein sequence, read N- to C-terminus: Large ribosomal subunit protein uL18 (121 aa).

This sequence belongs to the universal ribosomal protein uL18 family. Part of the 50S ribosomal subunit; part of the 5S rRNA/L5/L18/L25 subcomplex. Contacts the 5S and 23S rRNAs.

In terms of biological role, this is one of the proteins that bind and probably mediate the attachment of the 5S RNA into the large ribosomal subunit, where it forms part of the central protuberance. The chain is Large ribosomal subunit protein uL18 from Mesomycoplasma hyopneumoniae (strain 232) (Mycoplasma hyopneumoniae).